The following is a 184-amino-acid chain: Large ribosomal subunit protein uL6 (184 aa).

This sequence belongs to the universal ribosomal protein uL6 family. As to quaternary structure, part of the 50S ribosomal subunit.

In terms of biological role, this protein binds to the 23S rRNA, and is important in its secondary structure. It is located near the subunit interface in the base of the L7/L12 stalk, and near the tRNA binding site of the peptidyltransferase center. The polypeptide is Large ribosomal subunit protein uL6 (Pyrococcus abyssi (strain GE5 / Orsay)).